The following is a 145-amino-acid chain: Zinc finger C2H2 protein ECU06_1150 (145 aa).

The C2H2-type 1; atypical zinc-finger motif lies at Lys35–His57. The C2H2-type 2 zinc-finger motif lies at Phe63–His85.

This is Zinc finger C2H2 protein ECU06_1150 from Encephalitozoon cuniculi (strain GB-M1) (Microsporidian parasite).